A 91-amino-acid polypeptide reads, in one-letter code: Sm-like protein LSM36B (91 aa).

In terms of domain architecture, Sm spans 14–86; it reads TPADFLKSIR…VLYISTTKGT (73 aa).

Belongs to the snRNP Sm proteins family. In terms of assembly, component of the heptameric LSM1-LSM7 complex that forms a seven-membered ring structure with a donut shape. The LSM subunits are arranged in the order LSM1, LSM2, LSM3, LSM6, LSM5, LSM7 and LSM4. Component of the heptameric LSM2-LSM8 complex that forms a seven-membered ring structure with a donut shape. The LSM subunits are arranged in the order LSM8, LSM2, LSM3, LSM6, LSM5, LSM7 and LSM4. LSM6B subunit interacts only with its two neighboring subunits, LSM3A or LSM3B and LSM5. Expressed in roots, leaves, stems, flowers and siliques.

It is found in the cytoplasm. It localises to the nucleus. Functionally, component of LSM protein complexes, which are involved in RNA processing. Component of the cytoplasmic LSM1-LSM7 complex which is involved in mRNA degradation by promoting decapping and leading to accurate 5'-3' mRNA decay. The cytoplasmic LSM1-LSM7 complex regulates developmental gene expression by the decapping of specific development-related transcripts. Component of the nuclear LSM2-LSM8 complex which is involved splicing nuclear mRNAs. LSM2-LSM8 binds directly to the U6 small nuclear RNAs (snRNAs) and is essential for accurate splicing of selected development-related mRNAs through the stabilization of the spliceosomal U6 snRNA. Plays a critical role in the regulation of development-related gene expression. The chain is Sm-like protein LSM36B from Arabidopsis thaliana (Mouse-ear cress).